A 251-amino-acid chain; its full sequence is uncharacterized protein (251 aa).

This is an uncharacterized protein from Haemophilus influenzae (strain ATCC 51907 / DSM 11121 / KW20 / Rd).